Reading from the N-terminus, the 213-residue chain is Virion protein US10 homolog (213 aa).

Belongs to the herpesviridae US10 family. Phosphorylated.

It is found in the virion tegument. The protein resides in the host nucleus matrix. In Gallid herpesvirus 2 (strain GA) (GaHV-2), this protein is Virion protein US10 homolog (US639).